Consider the following 269-residue polypeptide: Putative pyruvate, phosphate dikinase regulatory protein (269 aa).

Residue 151–158 (GISRTSKT) coordinates ADP.

The protein belongs to the pyruvate, phosphate/water dikinase regulatory protein family. PDRP subfamily.

The catalysed reaction is N(tele)-phospho-L-histidyl/L-threonyl-[pyruvate, phosphate dikinase] + ADP = N(tele)-phospho-L-histidyl/O-phospho-L-threonyl-[pyruvate, phosphate dikinase] + AMP + H(+). The enzyme catalyses N(tele)-phospho-L-histidyl/O-phospho-L-threonyl-[pyruvate, phosphate dikinase] + phosphate + H(+) = N(tele)-phospho-L-histidyl/L-threonyl-[pyruvate, phosphate dikinase] + diphosphate. In terms of biological role, bifunctional serine/threonine kinase and phosphorylase involved in the regulation of the pyruvate, phosphate dikinase (PPDK) by catalyzing its phosphorylation/dephosphorylation. The protein is Putative pyruvate, phosphate dikinase regulatory protein of Staphylococcus aureus.